Consider the following 434-residue polypeptide: Nicotinate phosphoribosyltransferase (434 aa).

His242 is modified (phosphohistidine; by autocatalysis).

It belongs to the NAPRTase family. In terms of processing, transiently phosphorylated on a His residue during the reaction cycle. Phosphorylation strongly increases the affinity for substrates and increases the rate of nicotinate D-ribonucleotide production. Dephosphorylation regenerates the low-affinity form of the enzyme, leading to product release.

The enzyme catalyses nicotinate + 5-phospho-alpha-D-ribose 1-diphosphate + ATP + H2O = nicotinate beta-D-ribonucleotide + ADP + phosphate + diphosphate. Its pathway is cofactor biosynthesis; NAD(+) biosynthesis; nicotinate D-ribonucleotide from nicotinate: step 1/1. In terms of biological role, catalyzes the synthesis of beta-nicotinate D-ribonucleotide from nicotinate and 5-phospho-D-ribose 1-phosphate at the expense of ATP. The polypeptide is Nicotinate phosphoribosyltransferase (Rhizobium rhizogenes (strain K84 / ATCC BAA-868) (Agrobacterium radiobacter)).